The following is a 335-amino-acid chain: Protein BRASSINAZOLE-RESISTANT 2 (335 aa).

Positions 1–19 (MTSDGATSTSAAAAAAAMA) are enriched in low complexity. Disordered regions lie at residues 1–40 (MTSD…RRRR), 85–122 (TYRK…FDSP), and 164–190 (PPLR…KPLP). Positions 22–103 (RKPSWREREN…PGDMAGSSSR (82 aa)) are required for DNA-binding. Residues 99–120 (GSSSRATPYSSHNQSPLSSTFD) show a composition bias toward polar residues. Phosphothreonine is present on T175. The segment at 231-251 (HAPATIPECDESDSSTVDSGH) is PEST-like.

Belongs to the BZR/LAT61 family. Interacts with ASK7/BIN2 through its C-terminal domain and with the bHLH transcription factors BIM1, BIM2 and BIM3 through its C- and N-terminal domains. Interacts (via N-terminus) with REF6 and ELF6. Interacts with MYB30. Interacts with IWS1. Interacts with ASHH2/SDG8. Binds to MYB56 when dephosphorylated in the nucleus of quiescent center (QC) cells. Binds to WRKY46, WRKY54 and WRKY70 to cooperatively regulate the expression of target genes. Post-translationally, phosphorylated by ASK7/BIN2. Phosphorylation increases protein degradation and/or interferes with the nuclear localization. As to expression, ubiquitously expressed in cotyledons, leaves, hypocotyls and roots.

The protein localises to the nucleus. It localises to the cytoplasm. In terms of biological role, positive regulator of brassinosteroid (BR) signaling. Transcription factor that activates target gene expression by binding specifically to the DNA sequence 5'-CANNTG-3'(E box) through its N-terminal domain. Can bind individually to the promoter as a homodimer or synergistically as a heterodimer with BIM1, BIM2 or BIM3. The C-terminal domain is probably involved in transcriptional activation. Recruits the transcription elongation factor IWS1 to control BR-regulated gene expression. Forms a trimeric complex with IWS1 and ASHH2/SDG8 to regulate BR-regulated gene expression. Promotes quiescent center (QC) self-renewal by cell divisions in the primary root. Binds to the E-boxes of the BRAVO promoter to repress its expression. The chain is Protein BRASSINAZOLE-RESISTANT 2 from Arabidopsis thaliana (Mouse-ear cress).